The chain runs to 306 residues: Homoserine kinase (306 aa).

84 to 94 (PAGLGLGSSGA) is a binding site for ATP.

The protein belongs to the GHMP kinase family. Homoserine kinase subfamily.

Its subcellular location is the cytoplasm. The enzyme catalyses L-homoserine + ATP = O-phospho-L-homoserine + ADP + H(+). It functions in the pathway amino-acid biosynthesis; L-threonine biosynthesis; L-threonine from L-aspartate: step 4/5. Functionally, catalyzes the ATP-dependent phosphorylation of L-homoserine to L-homoserine phosphate. The polypeptide is Homoserine kinase (Sulfurisphaera tokodaii (strain DSM 16993 / JCM 10545 / NBRC 100140 / 7) (Sulfolobus tokodaii)).